Reading from the N-terminus, the 158-residue chain is Endoribonuclease YbeY (158 aa).

Positions 114, 118, and 124 each coordinate Zn(2+).

The protein belongs to the endoribonuclease YbeY family. It depends on Zn(2+) as a cofactor.

It localises to the cytoplasm. In terms of biological role, single strand-specific metallo-endoribonuclease involved in late-stage 70S ribosome quality control and in maturation of the 3' terminus of the 16S rRNA. The chain is Endoribonuclease YbeY from Legionella pneumophila (strain Paris).